A 230-amino-acid chain; its full sequence is Complex I assembly factor TMEM126B, mitochondrial (230 aa).

4 helical membrane-spanning segments follow: residues 70 to 92 (LNIH…ANLV), 107 to 126 (YASL…KLFV), 139 to 161 (SCVL…ALAF), and 196 to 218 (AMAI…HYNI).

It belongs to the TMEM126 family. As to quaternary structure, part of the mitochondrial complex I assembly/MCIA complex that comprises at least the core subunits TMEM126B, NDUFAF1, ECSIT and ACAD9 and complement subunits such as COA1 and TMEM186. Associates with the intermediate 370 kDa subcomplex of incompletely assembled complex I. Interacts with TMEM70.

The protein resides in the mitochondrion membrane. In terms of biological role, as part of the MCIA complex, involved in the assembly of the mitochondrial complex I. Participates in constructing the membrane arm of complex I. The chain is Complex I assembly factor TMEM126B, mitochondrial from Mus musculus (Mouse).